A 782-amino-acid polypeptide reads, in one-letter code: Endonuclease MutS2 (782 aa).

336–343 is an ATP binding site; that stretch reads GPNTGGKT. One can recognise a Smr domain in the interval 707–782; that stretch reads LDLRGYRYEE…GFGVTVAELK (76 aa).

This sequence belongs to the DNA mismatch repair MutS family. MutS2 subfamily. As to quaternary structure, homodimer. Binds to stalled ribosomes, contacting rRNA.

Endonuclease that is involved in the suppression of homologous recombination and thus may have a key role in the control of bacterial genetic diversity. Functionally, acts as a ribosome collision sensor, splitting the ribosome into its 2 subunits. Detects stalled/collided 70S ribosomes which it binds and splits by an ATP-hydrolysis driven conformational change. Acts upstream of the ribosome quality control system (RQC), a ribosome-associated complex that mediates the extraction of incompletely synthesized nascent chains from stalled ribosomes and their subsequent degradation. Probably generates substrates for RQC. The polypeptide is Endonuclease MutS2 (Staphylococcus epidermidis (strain ATCC 35984 / DSM 28319 / BCRC 17069 / CCUG 31568 / BM 3577 / RP62A)).